A 449-amino-acid polypeptide reads, in one-letter code: Bifunctional protein GlmU (449 aa).

A pyrophosphorylase region spans residues 1-226 (MVIVAVLAAG…YEEILGVNDR (226 aa)). UDP-N-acetyl-alpha-D-glucosamine contacts are provided by residues 7–10 (LAAG), Lys-21, Gln-73, and 78–79 (GT). Residue Asp-103 coordinates Mg(2+). The UDP-N-acetyl-alpha-D-glucosamine site is built by Gly-140, Glu-155, Asn-170, and Asn-224. Residue Asn-224 coordinates Mg(2+). A linker region spans residues 227-247 (VQLAAAYQVLQNRIKKAWMQA). Residues 248 to 449 (GVTLIDPASI…VVKPNWEPEA (202 aa)) form an N-acetyltransferase region. Residues Arg-329 and Lys-347 each contribute to the UDP-N-acetyl-alpha-D-glucosamine site. The active-site Proton acceptor is His-359. Positions 362 and 373 each coordinate UDP-N-acetyl-alpha-D-glucosamine. Acetyl-CoA contacts are provided by residues Ala-376, 382–383 (NY), Ala-419, and Arg-436.

It in the N-terminal section; belongs to the N-acetylglucosamine-1-phosphate uridyltransferase family. This sequence in the C-terminal section; belongs to the transferase hexapeptide repeat family. In terms of assembly, homotrimer. Requires Mg(2+) as cofactor.

Its subcellular location is the cytoplasm. The enzyme catalyses alpha-D-glucosamine 1-phosphate + acetyl-CoA = N-acetyl-alpha-D-glucosamine 1-phosphate + CoA + H(+). It carries out the reaction N-acetyl-alpha-D-glucosamine 1-phosphate + UTP + H(+) = UDP-N-acetyl-alpha-D-glucosamine + diphosphate. The protein operates within nucleotide-sugar biosynthesis; UDP-N-acetyl-alpha-D-glucosamine biosynthesis; N-acetyl-alpha-D-glucosamine 1-phosphate from alpha-D-glucosamine 6-phosphate (route II): step 2/2. It functions in the pathway nucleotide-sugar biosynthesis; UDP-N-acetyl-alpha-D-glucosamine biosynthesis; UDP-N-acetyl-alpha-D-glucosamine from N-acetyl-alpha-D-glucosamine 1-phosphate: step 1/1. It participates in bacterial outer membrane biogenesis; LPS lipid A biosynthesis. Catalyzes the last two sequential reactions in the de novo biosynthetic pathway for UDP-N-acetylglucosamine (UDP-GlcNAc). The C-terminal domain catalyzes the transfer of acetyl group from acetyl coenzyme A to glucosamine-1-phosphate (GlcN-1-P) to produce N-acetylglucosamine-1-phosphate (GlcNAc-1-P), which is converted into UDP-GlcNAc by the transfer of uridine 5-monophosphate (from uridine 5-triphosphate), a reaction catalyzed by the N-terminal domain. In Thermosynechococcus vestitus (strain NIES-2133 / IAM M-273 / BP-1), this protein is Bifunctional protein GlmU.